The following is a 517-amino-acid chain: MDPLEALQKHVQRPEEFPLREVTVSGISYVAFGDYAYKKDTETSLQIYGKSDEFYSLESLVVFLKYSHENHGVYVKEAAAAGVRAVTRIDRKNVTEYLQGDRTDFPALMNQVNPLSLRQLLHSSEPEAKKPRLDGEAAGEPMDTSTSDEPQESAVSAAKKEVEIRALNDNLTKDRIAEMRRKRQSHREKGIVTIDESLSTLTSASLPKTRIHKTRENVMLGARDLSNVLDIITSAQRQWDLNEKKEKVAAVHATNLSKDQSGAAGGQQQRSGYSRYAQEAFAHEKTKEIQTEGSFIGSNFSSIKQGHHAVQKAPDAPPGRPPLAKPIQLLTSSTATSSGSSAAQNGSKRTSRSPIIIVPSAMNTMINLYNVRDILQNFSYVPVDQRRKETNKKPVDLAIQRQKNGVTYNIRVIDNAEKLANDDWDRVIAVFVMGVAWQFKGWKWNGNPTDIFTHIPAFHFHVDQDKPVAQVMQWNVHKIPVSATKRHMDKARFSQVWETIENFVRKNKPHLTARLGL.

Positions 124–135 (SEPEAKKPRLDG) are enriched in basic and acidic residues. 2 disordered regions span residues 124–159 (SEPE…SAAK) and 306–326 (GHHA…LAKP). Positions 315 to 324 (DAPPGRPPLA) are enriched in pro residues.

Belongs to the CDC73 family. In terms of assembly, component of the PAF1 complex which consists of at least cdc-73, ctr-9, leo-1, pafo-1 and rtfo-1.

Its subcellular location is the nucleus. Its function is as follows. Component of the PAF1 complex which is a multifunctional complex involved in transcription initiation via genetic interactions with TATA-binding proteins, elongation and transcription-coupled histone modification. This chain is Cell division cycle protein 73, found in Caenorhabditis elegans.